Reading from the N-terminus, the 210-residue chain is Ribosomal RNA small subunit methyltransferase G (210 aa).

S-adenosyl-L-methionine contacts are provided by residues G76, M81, 127 to 128, and R145; that span reads VE.

It belongs to the methyltransferase superfamily. RNA methyltransferase RsmG family.

It is found in the cytoplasm. It carries out the reaction guanosine(527) in 16S rRNA + S-adenosyl-L-methionine = N(7)-methylguanosine(527) in 16S rRNA + S-adenosyl-L-homocysteine. Functionally, specifically methylates the N7 position of guanine in position 527 of 16S rRNA. This is Ribosomal RNA small subunit methyltransferase G from Acinetobacter baumannii (strain SDF).